The chain runs to 332 residues: 4-hydroxy-3-methylbut-2-enyl diphosphate reductase (332 aa).

Residue Cys13 coordinates [4Fe-4S] cluster. Residues His41 and His75 each coordinate (2E)-4-hydroxy-3-methylbut-2-enyl diphosphate. His41 and His75 together coordinate dimethylallyl diphosphate. 2 residues coordinate isopentenyl diphosphate: His41 and His75. Cys97 is a binding site for [4Fe-4S] cluster. Position 125 (His125) interacts with (2E)-4-hydroxy-3-methylbut-2-enyl diphosphate. His125 contributes to the dimethylallyl diphosphate binding site. His125 is an isopentenyl diphosphate binding site. Glu127 acts as the Proton donor in catalysis. (2E)-4-hydroxy-3-methylbut-2-enyl diphosphate is bound at residue Thr168. [4Fe-4S] cluster is bound at residue Cys229. (2E)-4-hydroxy-3-methylbut-2-enyl diphosphate is bound by residues Ser257, Ser258, Asn259, and Ser306. Dimethylallyl diphosphate-binding residues include Ser257, Ser258, Asn259, and Ser306. Ser257, Ser258, Asn259, and Ser306 together coordinate isopentenyl diphosphate.

This sequence belongs to the IspH family. [4Fe-4S] cluster is required as a cofactor.

It carries out the reaction isopentenyl diphosphate + 2 oxidized [2Fe-2S]-[ferredoxin] + H2O = (2E)-4-hydroxy-3-methylbut-2-enyl diphosphate + 2 reduced [2Fe-2S]-[ferredoxin] + 2 H(+). The catalysed reaction is dimethylallyl diphosphate + 2 oxidized [2Fe-2S]-[ferredoxin] + H2O = (2E)-4-hydroxy-3-methylbut-2-enyl diphosphate + 2 reduced [2Fe-2S]-[ferredoxin] + 2 H(+). It functions in the pathway isoprenoid biosynthesis; dimethylallyl diphosphate biosynthesis; dimethylallyl diphosphate from (2E)-4-hydroxy-3-methylbutenyl diphosphate: step 1/1. The protein operates within isoprenoid biosynthesis; isopentenyl diphosphate biosynthesis via DXP pathway; isopentenyl diphosphate from 1-deoxy-D-xylulose 5-phosphate: step 6/6. Catalyzes the conversion of 1-hydroxy-2-methyl-2-(E)-butenyl 4-diphosphate (HMBPP) into a mixture of isopentenyl diphosphate (IPP) and dimethylallyl diphosphate (DMAPP). Acts in the terminal step of the DOXP/MEP pathway for isoprenoid precursor biosynthesis. This Chlorobaculum tepidum (strain ATCC 49652 / DSM 12025 / NBRC 103806 / TLS) (Chlorobium tepidum) protein is 4-hydroxy-3-methylbut-2-enyl diphosphate reductase.